Here is a 650-residue protein sequence, read N- to C-terminus: Chaperone protein DnaK (650 aa).

A Phosphothreonine; by autocatalysis modification is found at T200.

Belongs to the heat shock protein 70 family.

Its function is as follows. Acts as a chaperone. The polypeptide is Chaperone protein DnaK (Burkholderia orbicola (strain MC0-3)).